A 232-amino-acid polypeptide reads, in one-letter code: Lipoprotein-releasing system ATP-binding protein LolD (232 aa).

The ABC transporter domain occupies 11-232 (IEVTDLQRAF…LHDGRLIEEY (222 aa)). 47 to 54 (GPSGAGKS) lines the ATP pocket.

Belongs to the ABC transporter superfamily. Lipoprotein translocase (TC 3.A.1.125) family. As to quaternary structure, the complex is composed of two ATP-binding proteins (LolD) and two transmembrane proteins (LolC and LolE).

The protein resides in the cell inner membrane. Part of the ABC transporter complex LolCDE involved in the translocation of mature outer membrane-directed lipoproteins, from the inner membrane to the periplasmic chaperone, LolA. Responsible for the formation of the LolA-lipoprotein complex in an ATP-dependent manner. This Zymomonas mobilis subsp. mobilis (strain ATCC 31821 / ZM4 / CP4) protein is Lipoprotein-releasing system ATP-binding protein LolD.